The sequence spans 340 residues: L-threonine 3-dehydrogenase (340 aa).

Residue cysteine 38 participates in Zn(2+) binding. Residues threonine 40 and histidine 43 each act as charge relay system in the active site. Residues histidine 63, glutamate 64, cysteine 93, cysteine 96, cysteine 99, and cysteine 107 each contribute to the Zn(2+) site. NAD(+)-binding positions include isoleucine 175, aspartate 195, arginine 200, 261–263, and 285–286; these read LGI and IY.

Belongs to the zinc-containing alcohol dehydrogenase family. In terms of assembly, homotetramer. Zn(2+) is required as a cofactor.

It localises to the cytoplasm. The enzyme catalyses L-threonine + NAD(+) = (2S)-2-amino-3-oxobutanoate + NADH + H(+). It functions in the pathway amino-acid degradation; L-threonine degradation via oxydo-reductase pathway; glycine from L-threonine: step 1/2. In terms of biological role, catalyzes the NAD(+)-dependent oxidation of L-threonine to 2-amino-3-ketobutyrate. This chain is L-threonine 3-dehydrogenase, found in Xanthomonas campestris pv. campestris (strain ATCC 33913 / DSM 3586 / NCPPB 528 / LMG 568 / P 25).